Consider the following 132-residue polypeptide: Large-conductance mechanosensitive channel (132 aa).

The next 3 helical transmembrane spans lie at 8 to 28 (FALKGNVMDLAVGVVIGGAFG), 30 to 50 (IVSSLVSDVIMPLVGLLLGGV), and 67 to 87 (GAFIQTVVDFLIIAFSIFLFI).

Belongs to the MscL family. As to quaternary structure, homopentamer.

The protein resides in the cell membrane. Channel that opens in response to stretch forces in the membrane lipid bilayer. May participate in the regulation of osmotic pressure changes within the cell. This Bacillus cytotoxicus (strain DSM 22905 / CIP 110041 / 391-98 / NVH 391-98) protein is Large-conductance mechanosensitive channel.